The primary structure comprises 326 residues: Polycomb complex protein BMI-1 (326 aa).

Residues 18 to 57 (CVLCGGYFIDATTIIECLHSFCKTCIVRYLETSKYCPICD) form an RING-type zinc finger. The Nuclear localization signal signature appears at 81–95 (KLVPGLFKNEMKRRR). Positions 162 to 182 (RYLRCPAAMTVMHLRKFLRSK) are interaction with PHC2. An interaction with E4F1 region spans residues 164–228 (LRCPAAMTVM…GPLPLKYRVR (65 aa)). Residues 236 to 326 (ISHQRDGLTN…VNGSSATSSG (91 aa)) are disordered. Over residues 266 to 278 (PSTSSCLPSPSTP) the composition is skewed to low complexity. The segment covering 279 to 309 (VQSPHPQFPHISSTMNGTSNSPSGNHQSSFA) has biased composition (polar residues). The segment covering 315-326 (SSVNGSSATSSG) has biased composition (low complexity).

As to quaternary structure, component of a PRC1-like complex. Identified in a PRC1-like HPRC-H complex with CBX2, CBX4, CBX8, PHC1, PHC2, PHC3 RING1 and RNF2. Interacts with RNF2/RING2. Interacts with RING1. Part of a complex that contains RNF2, UB2D3 and BMI1, where RNF2 and BMI1 form a tight heterodimer, and UB2D3 interacts only with RNF2. The complex composed of RNF2, UB2D3 and BMI1 binds nucleosomes, and has activity only with nucleosomal histone H2A. Interacts with CBX7 and CBX8. Interacts with SPOP. Part of a complex consisting of BMI1, CUL3 and SPOP. Interacts with E4F1. Interacts with PHC2. Interacts with zinc finger protein ZNF277. May be part of a complex including at least ZNF277, BMI1 and RNF2/RING2. Post-translationally, monoubiquitinated. May be polyubiquitinated; which does not lead to proteasomal degradation.

It is found in the nucleus. The protein localises to the cytoplasm. In terms of biological role, component of a Polycomb group (PcG) multiprotein PRC1-like complex, a complex class required to maintain the transcriptionally repressive state of many genes, including Hox genes, throughout development. PcG PRC1 complex acts via chromatin remodeling and modification of histones; it mediates monoubiquitination of histone H2A 'Lys-119', rendering chromatin heritably changed in its expressibility. The complex composed of RNF2, UB2D3 and BMI1 binds nucleosomes, and has activity only with nucleosomal histone H2A. In the PRC1-like complex, regulates the E3 ubiquitin-protein ligase activity of RNF2/RING2. In Homo sapiens (Human), this protein is Polycomb complex protein BMI-1 (BMI1).